Consider the following 32-residue polypeptide: Dermaseptin-8 (32 aa).

Residue glutamine 32 is modified to Glutamine amide.

In terms of tissue distribution, expressed by the skin glands.

The protein resides in the secreted. Functionally, antimicrobial peptide, active against the Gram-positive bacterium S.aureus, and the Gram-negative bacteriun E.coli. Has hemolytic activity at 432 uM. The chain is Dermaseptin-8 from Phyllomedusa tarsius (Brownbelly leaf frog).